A 1070-amino-acid chain; its full sequence is Error-prone DNA polymerase (1070 aa).

It belongs to the DNA polymerase type-C family. DnaE2 subfamily.

It localises to the cytoplasm. It carries out the reaction DNA(n) + a 2'-deoxyribonucleoside 5'-triphosphate = DNA(n+1) + diphosphate. DNA polymerase involved in damage-induced mutagenesis and translesion synthesis (TLS). It is not the major replicative DNA polymerase. The sequence is that of Error-prone DNA polymerase from Aromatoleum aromaticum (strain DSM 19018 / LMG 30748 / EbN1) (Azoarcus sp. (strain EbN1)).